Reading from the N-terminus, the 230-residue chain is Thymidylate kinase (230 aa).

Gly-23–Thr-30 contributes to the ATP binding site.

It belongs to the thymidylate kinase family.

The enzyme catalyses dTMP + ATP = dTDP + ADP. Functionally, phosphorylation of dTMP to form dTDP in both de novo and salvage pathways of dTTP synthesis. The polypeptide is Thymidylate kinase (Ureaplasma parvum serovar 3 (strain ATCC 27815 / 27 / NCTC 11736)).